The primary structure comprises 347 residues: MKPPILITIMLTVVSGTMIVLTSSHWLTVWIGFEMNMLAIIPILMKKSNPRAIEASTKYLLTQATASMILMMGVAIDLLYSGQWTMSKTLCPMASAMMTIALAMKLGLAPFHFWVPEVTQGIHMSSGLILLTWQKIAPLSILYQISPTINPNLLLPMAIASVLIGGWGGLNQTQLRKILAYSSIAHMGWMAAITLYNPTMMILNLTIYIIMTSTTFMLFMYNSSTTTLSLSQTWNKAPLITSLILMLMLSLGGLPPLSGFIPKWMIIQELTKNEMIIVPTLLAMTALLNLYFYMRLTYTTTLTMFPSTNNMMMKWKFNNTKKMTLLSPLIVVSTMLLPITPLLSILD.

The next 11 membrane-spanning stretches (helical) occupy residues 3–23 (PPIL…VLTS), 25–45 (HWLT…PILM), 59–79 (YLLT…IDLL), 96–116 (AMMT…FWVP), 122–142 (IHMS…LSIL), 149–169 (INPN…GWGG), 178–198 (ILAY…LYNP), 200–220 (MMIL…MLFM), 237–257 (APLI…LPPL), 274–294 (EMII…YFYM), and 325–345 (LLSP…LLSI).

The protein belongs to the complex I subunit 2 family. Core subunit of respiratory chain NADH dehydrogenase (Complex I) which is composed of 45 different subunits. Interacts with TMEM242.

Its subcellular location is the mitochondrion inner membrane. It catalyses the reaction a ubiquinone + NADH + 5 H(+)(in) = a ubiquinol + NAD(+) + 4 H(+)(out). In terms of biological role, core subunit of the mitochondrial membrane respiratory chain NADH dehydrogenase (Complex I) which catalyzes electron transfer from NADH through the respiratory chain, using ubiquinone as an electron acceptor. Essential for the catalytic activity and assembly of complex I. In Cynictis penicillata (Yellow mongoose), this protein is NADH-ubiquinone oxidoreductase chain 2.